The sequence spans 372 residues: Lipoyl synthase, mitochondrial (372 aa).

Residues Cys103, Cys108, Cys114, Cys134, Cys138, Cys141, and Ser349 each coordinate [4Fe-4S] cluster. Residues 119 to 338 (EHGTQTATIM…EERGNQLGFL (220 aa)) form the Radical SAM core domain.

Belongs to the radical SAM superfamily. Lipoyl synthase family. [4Fe-4S] cluster is required as a cofactor.

It is found in the mitochondrion. It carries out the reaction [[Fe-S] cluster scaffold protein carrying a second [4Fe-4S](2+) cluster] + N(6)-octanoyl-L-lysyl-[protein] + 2 oxidized [2Fe-2S]-[ferredoxin] + 2 S-adenosyl-L-methionine + 4 H(+) = [[Fe-S] cluster scaffold protein] + N(6)-[(R)-dihydrolipoyl]-L-lysyl-[protein] + 4 Fe(3+) + 2 hydrogen sulfide + 2 5'-deoxyadenosine + 2 L-methionine + 2 reduced [2Fe-2S]-[ferredoxin]. It functions in the pathway protein modification; protein lipoylation via endogenous pathway; protein N(6)-(lipoyl)lysine from octanoyl-[acyl-carrier-protein]: step 2/2. Catalyzes the radical-mediated insertion of two sulfur atoms into the C-6 and C-8 positions of the octanoyl moiety bound to the lipoyl domains of lipoate-dependent enzymes, thereby converting the octanoylated domains into lipoylated derivatives. This is Lipoyl synthase, mitochondrial from Drosophila willistoni (Fruit fly).